Here is a 121-residue protein sequence, read N- to C-terminus: Small ribosomal subunit protein uS13 (121 aa).

The interval 91–121 (HRRGLPVRGQNSKNNARTRKGPRRTVANKKK) is disordered. The span at 106–121 (ARTRKGPRRTVANKKK) shows a compositional bias: basic residues.

It belongs to the universal ribosomal protein uS13 family. Part of the 30S ribosomal subunit. Forms a loose heterodimer with protein S19. Forms two bridges to the 50S subunit in the 70S ribosome.

Located at the top of the head of the 30S subunit, it contacts several helices of the 16S rRNA. In the 70S ribosome it contacts the 23S rRNA (bridge B1a) and protein L5 of the 50S subunit (bridge B1b), connecting the 2 subunits; these bridges are implicated in subunit movement. Contacts the tRNAs in the A and P-sites. In Bacillus cereus (strain ZK / E33L), this protein is Small ribosomal subunit protein uS13.